Reading from the N-terminus, the 211-residue chain is Putative hydrolase SMU_367 (211 aa).

The N-terminal stretch at 1-29 is a signal peptide; it reads MKKQFLEKAVFTVAATAATVVLGNKMADA. The 45-residue stretch at 30–74 folds into the LysM domain; that stretch reads DTYTLQEGDSFFSVAQRYHMDAYELASMNGKDITSLILPGQTLTV. Residues 77–101 form a disordered region; that stretch reads SAAPDNQAAAPTDTTQATTETNDAN. A compositionally biased stretch (low complexity) spans 78–101; that stretch reads AAPDNQAAAPTDTTQATTETNDAN. The Peptidase C51 domain maps to 85–209; that stretch reads AAPTDTTQAT…GTPGSVSYIY (125 aa).

The chain is Putative hydrolase SMU_367 from Streptococcus mutans serotype c (strain ATCC 700610 / UA159).